The sequence spans 238 residues: Ribonuclease-like storage protein (238 aa).

The N-terminal stretch at 1–23 (MRAIYIISVIIVSLSIFSWGGNA) is a signal peptide. Residue Gln37 coordinates RNA. A disulfide bridge links Cys43 with Cys49. Residues His61, Phe109, 112–113 (HE), and 116–117 (KH) contribute to the RNA site. The Proton donor role is filled by His61. Intrachain disulfides connect Cys76-Cys120 and Cys196-Cys207. Glu113 is an active-site residue. Residue His117 is the Proton acceptor of the active site.

The protein belongs to the RNase T2 family. In terms of assembly, homodimer. In terms of tissue distribution, root.

May act as a storage protein providing a nitrogen source. Seems to have no RNase activity although it has conserved the active site residues. The polypeptide is Ribonuclease-like storage protein (Panax ginseng (Korean ginseng)).